The chain runs to 376 residues: Putative glutamate--cysteine ligase 2-1 (376 aa).

It belongs to the glutamate--cysteine ligase type 2 family. YbdK subfamily.

It carries out the reaction L-cysteine + L-glutamate + ATP = gamma-L-glutamyl-L-cysteine + ADP + phosphate + H(+). In terms of biological role, ATP-dependent carboxylate-amine ligase which exhibits weak glutamate--cysteine ligase activity. This is Putative glutamate--cysteine ligase 2-1 from Mycobacterium sp. (strain JLS).